We begin with the raw amino-acid sequence, 457 residues long: GTPase Era, mitochondrial (457 aa).

A mitochondrion-targeting transit peptide spans 1-18 (MAFRVSISTFGKSLRVRR). The 244-residue stretch at 107 to 350 (KVLRVAIIGA…RYLVVGAKPG (244 aa)) folds into the Era-type G domain. Residues 115–122 (GAPNAGKS) form a G1 region. A GTP-binding site is contributed by 115-122 (GAPNAGKS). The G2 stretch occupies residues 141 to 145 (HTTRA). The interval 162 to 165 (DTPG) is G3. Residues 162–166 (DTPGL) and 231–234 (NKVD) each bind GTP. The interval 231 to 234 (NKVD) is G4. Residues 270-290 (AERRTDREARTSGSGDEEKPG) are compositionally biased toward basic and acidic residues. Residues 270–300 (AERRTDREARTSGSGDEEKPGGDVADGEGSE) are disordered. The tract at residues 328–330 (VSA) is G5. A KH type-2 domain is found at 376-457 (LLEYLPKEVP…KLRLSVKVKN (82 aa)).

This sequence belongs to the TRAFAC class TrmE-Era-EngA-EngB-Septin-like GTPase superfamily. Era GTPase family.

It is found in the mitochondrion matrix. It localises to the mitochondrion inner membrane. Its function is as follows. Probable GTPase that plays a role in the mitochondrial ribosomal small subunit assembly. Specifically binds the 12S mitochondrial rRNA (12S mt-rRNA) to a 33 nucleotide section delineating the 3' terminal stem-loop region. May act as a chaperone that protects the 12S mt-rRNA on the 28S mitoribosomal subunit during ribosomal small subunit assembly. This Salmo salar (Atlantic salmon) protein is GTPase Era, mitochondrial (eral1).